Reading from the N-terminus, the 438-residue chain is 3-phosphoshikimate 1-carboxyvinyltransferase (438 aa).

Lysine 28, serine 29, and arginine 33 together coordinate 3-phosphoshikimate. Lysine 28 provides a ligand contact to phosphoenolpyruvate. The phosphoenolpyruvate site is built by glycine 97 and arginine 125. 3-phosphoshikimate contacts are provided by serine 168, serine 169, glutamine 170, glutamate 316, and histidine 343. Glutamine 170 is a binding site for phosphoenolpyruvate. Glutamate 316 acts as the Proton acceptor in catalysis. Phosphoenolpyruvate-binding residues include arginine 347, arginine 388, and lysine 413.

It belongs to the EPSP synthase family. Monomer.

It is found in the cytoplasm. The enzyme catalyses 3-phosphoshikimate + phosphoenolpyruvate = 5-O-(1-carboxyvinyl)-3-phosphoshikimate + phosphate. The protein operates within metabolic intermediate biosynthesis; chorismate biosynthesis; chorismate from D-erythrose 4-phosphate and phosphoenolpyruvate: step 6/7. In terms of biological role, catalyzes the transfer of the enolpyruvyl moiety of phosphoenolpyruvate (PEP) to the 5-hydroxyl of shikimate-3-phosphate (S3P) to produce enolpyruvyl shikimate-3-phosphate and inorganic phosphate. The polypeptide is 3-phosphoshikimate 1-carboxyvinyltransferase (Rhodococcus jostii (strain RHA1)).